The following is a 330-amino-acid chain: Tryptophan--tRNA ligase (330 aa).

Residues 10–12 (QTT) and 18–19 (GN) contribute to the ATP site. The 'HIGH' region signature appears at 11-19 (TTGALHLGN). D134 contributes to the L-tryptophan binding site. ATP contacts are provided by residues 146–148 (GED), I186, and 195–199 (KMSKS). Positions 195–199 (KMSKS) match the 'KMSKS' region motif.

Belongs to the class-I aminoacyl-tRNA synthetase family. In terms of assembly, homodimer.

It localises to the cytoplasm. It catalyses the reaction tRNA(Trp) + L-tryptophan + ATP = L-tryptophyl-tRNA(Trp) + AMP + diphosphate + H(+). In terms of biological role, catalyzes the attachment of tryptophan to tRNA(Trp). In Rickettsia prowazekii (strain Madrid E), this protein is Tryptophan--tRNA ligase.